The chain runs to 221 residues: 2-amino-5-formylamino-6-ribosylaminopyrimidin-4(3H)-one 5'-monophosphate deformylase (221 aa).

Glu29, His31, Asp40, and His108 together coordinate Fe cation.

This sequence belongs to the creatininase superfamily. FAPy deformylase family. As to quaternary structure, homodimer. Fe(2+) is required as a cofactor. Requires Zn(2+) as cofactor.

The catalysed reaction is 2-amino-5-formylamino-6-(5-phospho-D-ribosylamino)pyrimidin-4(3H)-one + H2O = 2,5-diamino-6-(1-D-ribosylamino)pyrimidin-4(3H)-one 5'-phosphate + formate + H(+). Its pathway is cofactor biosynthesis; coenzyme F420 biosynthesis. It functions in the pathway cofactor biosynthesis; riboflavin biosynthesis. In terms of biological role, catalyzes the hydrolysis of the formamide of 2-amino-5-formylamino-6-ribosylamino-4(3H)-pyrimidinone 5'-monophosphate (FAPy) to form 2,5-diamino-6-ribosylamino-4(3H)-pyrimidinone 5'-phosphate (APy). The chain is 2-amino-5-formylamino-6-ribosylaminopyrimidin-4(3H)-one 5'-monophosphate deformylase from Methanococcus maripaludis (strain C5 / ATCC BAA-1333).